Reading from the N-terminus, the 321-residue chain is Mitochondrial thiamine pyrophosphate carrier 1 (321 aa).

6 consecutive transmembrane segments (helical) span residues 12 to 28, 91 to 107, 126 to 146, 184 to 200, 221 to 237, and 284 to 301; these read GTRR…GLVS, LMYV…YRTT, FVAG…LDLL, AAVG…FATY, AAGV…MFPL, and GLTV…VTMW. Solcar repeat units lie at residues 12–110, 120–206, and 214–309; these read GTRR…TTQA, PPSA…LRPP, and PFGS…SLRL.

The protein belongs to the mitochondrial carrier (TC 2.A.29) family.

It localises to the mitochondrion inner membrane. Functionally, mitochondrial transporter that mediates uptake of thiamine pyrophosphate (ThPP) into mitochondria. This chain is Mitochondrial thiamine pyrophosphate carrier 1 (tpc1), found in Aspergillus niger (strain ATCC MYA-4892 / CBS 513.88 / FGSC A1513).